Here is a 102-residue protein sequence, read N- to C-terminus: PE family immunomodulator PE5 (102 aa).

The region spanning 3–92 is the PE domain; that stretch reads LRVVPEGLAA…GASYLAGDAA (90 aa).

This sequence belongs to the mycobacterial PE family.

The protein resides in the secreted. The protein localises to the cell envelope. It is found in the cell surface. In terms of biological role, important for the siderophore-mediated iron-acquisition function of ESX-3. May play a pivotal role in the evasion of host immune response by M.tuberculosis. Mediates production of IL-10 via activation of the p38 and ERK1/2 mitogen-activated protein kinase (MAPK) signaling pathways. This chain is PE family immunomodulator PE5, found in Mycobacterium tuberculosis (strain ATCC 25618 / H37Rv).